A 583-amino-acid polypeptide reads, in one-letter code: Chromosomal replication initiator protein DnaA (583 aa).

The segment at 1–91 is domain I, interacts with DnaA modulators; it reads MNAENLDPAT…SPMFPAFKVM (91 aa). 2 disordered regions span residues 86–179 and 197–232; these read PAFK…QQPV and VAGF…NYRD. Residues 91–235 are domain II; sequence MPPAQPEPQT…VTGNYRDPVT (145 aa). Over residues 97–106 the composition is skewed to polar residues; that stretch reads EPQTTASPED. Basic and acidic residues-rich tracts occupy residues 126-135 and 147-174; these read EDSRTPRHSA and QERE…EHEP. Residues 205 to 226 show a composition bias toward polar residues; sequence AGTTAPQYPPQSEMQGSFTPGV. Positions 236–460 are domain III, AAA+ region; the sequence is HLNSNDTFDT…GALKRVIAMA (225 aa). ATP-binding residues include glycine 280, glycine 282, lysine 283, and threonine 284. The domain IV, binds dsDNA stretch occupies residues 461-583; that stretch reads SLNHQPVTRA…TVELKQHLND (123 aa).

The protein belongs to the DnaA family. In terms of assembly, oligomerizes as a right-handed, spiral filament on DNA at oriC.

It localises to the cytoplasm. In terms of biological role, plays an essential role in the initiation and regulation of chromosomal replication. ATP-DnaA binds to the origin of replication (oriC) to initiate formation of the DNA replication initiation complex once per cell cycle. Binds the DnaA box (a 9 base pair repeat at the origin) and separates the double-stranded (ds)DNA. Forms a right-handed helical filament on oriC DNA; dsDNA binds to the exterior of the filament while single-stranded (ss)DNA is stabiized in the filament's interior. The ATP-DnaA-oriC complex binds and stabilizes one strand of the AT-rich DNA unwinding element (DUE), permitting loading of DNA polymerase. After initiation quickly degrades to an ADP-DnaA complex that is not apt for DNA replication. Binds acidic phospholipids. In Bifidobacterium animalis subsp. lactis (strain AD011), this protein is Chromosomal replication initiator protein DnaA.